Reading from the N-terminus, the 357-residue chain is Sulfate/thiosulfate import ATP-binding protein CysA (357 aa).

The 235-residue stretch at 3–237 (ITIQNLNKHF…PENAFVTEFL (235 aa)) folds into the ABC transporter domain. ATP is bound at residue 35 to 42 (GPSGCGKT).

Belongs to the ABC transporter superfamily. Sulfate/tungstate importer (TC 3.A.1.6) family. The complex is composed of two ATP-binding proteins (CysA), two transmembrane proteins (CysT and CysW) and a solute-binding protein (CysP).

Its subcellular location is the cell inner membrane. It catalyses the reaction sulfate(out) + ATP + H2O = sulfate(in) + ADP + phosphate + H(+). The enzyme catalyses thiosulfate(out) + ATP + H2O = thiosulfate(in) + ADP + phosphate + H(+). In terms of biological role, part of the ABC transporter complex CysAWTP involved in sulfate/thiosulfate import. Responsible for energy coupling to the transport system. In Neisseria meningitidis serogroup B (strain ATCC BAA-335 / MC58), this protein is Sulfate/thiosulfate import ATP-binding protein CysA.